We begin with the raw amino-acid sequence, 554 residues long: MAYYRTPHDVTALPAWQALNQHRQAMQDFSMREAFNADPQRFSQFTLSSCGLFLDYSKNLITSETRDLLVGLAKEVGLKDAINSLYAGEPVNSSEGRPALHTALRRPVGDKLSVNGVNIMPDVHKVLNQITDLVGRIHDGLWRGYTEKPITDVVNIGIGGSFLGPELVSEALLSYAHKGVRCHYLANIDGSEFHELTMKLRAETTLFIVSSKSFNTLETLKNAQAARAWYLAQGGSEAELYRHFIAVSSNNAAAVAFGIREENIFPMWDWVGGRYSLWSAIGLPIALAIGMSNFKELLSGAYTMDQHFQNAPFEANMPVLLGLLGVWYGNFWGAQSHAILPYDHYLRNITKHLQQLDMESNGKSVRQDGTPVATDTGPVIWGGVGCNGQHAYHQLLHQGTQLIPADFIVPIVSFNPVSDHHQWLYANCLSQSQALMLGKTRVEAEAELRDKGIPEDEVQKLAPHKVIPGNRPSNTLVVERISPRRLGALVAMYEHKVFVQSVIWGINAFDQWGVELGKELGKGVYNRLTGAEETSAEDASTQGLINYFRGRHRG.

Catalysis depends on E359, which acts as the Proton donor. Residues H390 and K518 contribute to the active site.

It belongs to the GPI family.

The protein resides in the cytoplasm. It catalyses the reaction alpha-D-glucose 6-phosphate = beta-D-fructose 6-phosphate. Its pathway is carbohydrate biosynthesis; gluconeogenesis. It functions in the pathway carbohydrate degradation; glycolysis; D-glyceraldehyde 3-phosphate and glycerone phosphate from D-glucose: step 2/4. Functionally, catalyzes the reversible isomerization of glucose-6-phosphate to fructose-6-phosphate. In Pseudomonas fluorescens (strain SBW25), this protein is Glucose-6-phosphate isomerase.